The primary structure comprises 298 residues: Fluorinase (298 aa).

S-adenosyl-L-methionine is bound by residues Asp-14, 19–21 (DDS), Tyr-75, Ser-156, Asp-209, Asn-214, 268–269 (SR), and 276–278 (RNA).

The protein belongs to the SAM hydrolase / SAM-dependent halogenase family.

It catalyses the reaction fluoride + S-adenosyl-L-methionine = 5'-deoxy-5'-fluoroadenosine + L-methionine. Catalyzes the formation of a C-F bond by combining S-adenosyl-L-methionine (SAM) and fluoride to generate 5'-fluoro-5'-deoxyadenosine (5'-FDA) and L-methionine. This Actinoplanes sp. (strain N902-109) protein is Fluorinase.